The primary structure comprises 2566 residues: Zinc finger protein GLI1 (2566 aa).

Disordered regions lie at residues 349 to 375, 430 to 508, and 985 to 1046; these read HHSSGYVPNHTAPMLRGGKKRSHSQSS, DIRR…RSTG, and KSIE…GDPD. Composition is skewed to polar residues over residues 434–444 and 457–492; these read TLSSNGNSSHT and WSPNSPHSSGSGFDNYQTSSHKSLPLPSTLQTYQQH. The segment covering 493–508 has biased composition (low complexity); the sequence is SGYTSTSGSSGNRSTG. The segment covering 993-1016 has biased composition (polar residues); the sequence is WQNQNVFSSRRNSTRDPSNNNNSG. The span at 1023–1035 shows a compositional bias: acidic residues; it reads DEPDVDDDEELDD. The segment at 1088 to 1110 adopts a C2H2-type 1; degenerate zinc-finger fold; that stretch reads RECVRGTRPFKAQYMLVVHMRRH. 3 consecutive C2H2-type zinc fingers follow at residues 1116-1140, 1146-1171, and 1177-1202; these read HKCIFEGCIKRYSRLENLKTHLRSH, YQCEIPGCNKAFSNASDRAKHQNRTH, and YTCKVDGCSKRYTDPSSLRKHVKTVH. Disordered regions lie at residues 1254–1313, 1465–1491, 1650–1677, 1727–1791, and 2067–2091; these read GNSN…PRDS, LSTTSNPVQSLSPSIDNPINSTGTKQK, SKNMDNNSQTKNNNELNEENSPQSNQNE, AAAS…MDND, and MHFSPHSYVHSSSSNSSPFNSNRPH. Low complexity-rich tracts occupy residues 1661–1677 and 1727–1743; these read NNNELNEENSPQSNQNE and AAASSGIGSGVTTTTAS. Basic residues predominate over residues 1752 to 1769; it reads NHHHQKQQPKHSHQHQNR. Residues 1770-1791 show a composition bias toward polar residues; it reads TKSINSDNNYSNQDNVSTMDND. The span at 2070–2090 shows a compositional bias: low complexity; sequence SPHSYVHSSSSNSSPFNSNRP.

The protein belongs to the GLI C2H2-type zinc-finger protein family. Expressed in female-paired or unpaired males along the ventral surface in neurons and skin tegument cells. In virgin and mature females, expressed bilaterally along the edges of the body in neurons. In mature females, also expressed in skin tegument cells.

Its subcellular location is the nucleus. Its function is as follows. Probable transcription factor which plays an essential role in males to trigger female sexual development by inducing NRPS expression in male. NRPS produces the pheromone beta-alanyl-tryptamine (BATT), which stimulates female sexual development. The chain is Zinc finger protein GLI1 from Schistosoma mansoni (Blood fluke).